A 258-amino-acid polypeptide reads, in one-letter code: UPF0246 protein Sfri_2896 (258 aa).

The protein belongs to the UPF0246 family.

This is UPF0246 protein Sfri_2896 from Shewanella frigidimarina (strain NCIMB 400).